The following is a 195-amino-acid chain: uncharacterized protein (195 aa).

A helical membrane pass occupies residues Ile-175 to Gly-195.

The protein resides in the membrane. This is an uncharacterized protein from Methanocaldococcus jannaschii (strain ATCC 43067 / DSM 2661 / JAL-1 / JCM 10045 / NBRC 100440) (Methanococcus jannaschii).